A 326-amino-acid polypeptide reads, in one-letter code: Probable sodium/potassium-transporting ATPase subunit beta-3 (326 aa).

At 1–59 (MMSSRTRKIYLFVFMFISTSLQLMNGEAKAEPETFRQFLYNKQKGTVLGRTGTSWCQIT) the chain is on the cytoplasmic side. A helical; Signal-anchor for type II membrane protein transmembrane segment spans residues 60 to 80 (VFYIIFYIFLSAFFIGCLAIF). The Lumenal portion of the chain corresponds to 81–326 (LKTLDPKVPR…DKKPVAAPAA (246 aa)). 2 N-linked (GlcNAc...) asparagine glycosylation sites follow: asparagine 144 and asparagine 147. Cysteine 234 and cysteine 291 form a disulfide bridge.

This sequence belongs to the X(+)/potassium ATPases subunit beta family. As to quaternary structure, the sodium/potassium-transporting ATPase is composed of a catalytic alpha subunit, an auxiliary non-catalytic beta subunit and an additional regulatory subunit.

The protein resides in the cell membrane. In terms of biological role, this is the non-catalytic component of the active enzyme, which catalyzes the hydrolysis of ATP coupled with the exchange of Na(+) and K(+) ions across the plasma membrane. The beta subunit regulates, through assembly of alpha/beta heterodimers, the number of sodium pumps transported to the plasma membrane. Implicated in genomic response to various soil bacteria that affects fitness, lifespan and brood size. The protein is Probable sodium/potassium-transporting ATPase subunit beta-3 (nkb-3) of Caenorhabditis briggsae.